Consider the following 208-residue polypeptide: Small ribosomal subunit protein eS8 (208 aa).

The segment at 1-37 (MGISRDNWHKRRKTGGKRKPYHKKRKYEPGRPAANTK) is disordered. Over residues 8–26 (WHKRRKTGGKRKPYHKKRK) the composition is skewed to basic residues.

It belongs to the eukaryotic ribosomal protein eS8 family. As to quaternary structure, component of the small ribosomal subunit. Identified in a IGF2BP1-dependent mRNP granule complex containing untranslated mRNAs. Part of the small subunit (SSU) processome, composed of more than 70 proteins and the RNA chaperone small nucleolar RNA (snoRNA) U3.

It localises to the cytoplasm. The protein localises to the membrane. Its subcellular location is the nucleus. It is found in the nucleolus. Component of the small ribosomal subunit. The ribosome is a large ribonucleoprotein complex responsible for the synthesis of proteins in the cell. Part of the small subunit (SSU) processome, first precursor of the small eukaryotic ribosomal subunit. During the assembly of the SSU processome in the nucleolus, many ribosome biogenesis factors, an RNA chaperone and ribosomal proteins associate with the nascent pre-rRNA and work in concert to generate RNA folding, modifications, rearrangements and cleavage as well as targeted degradation of pre-ribosomal RNA by the RNA exosome. The chain is Small ribosomal subunit protein eS8 (rps8) from Xenopus laevis (African clawed frog).